We begin with the raw amino-acid sequence, 155 residues long: Small ribosomal subunit protein uS7 (155 aa).

This sequence belongs to the universal ribosomal protein uS7 family. In terms of assembly, part of the 30S ribosomal subunit. Contacts proteins S9 and S11.

One of the primary rRNA binding proteins, it binds directly to 16S rRNA where it nucleates assembly of the head domain of the 30S subunit. Is located at the subunit interface close to the decoding center, probably blocks exit of the E-site tRNA. This is Small ribosomal subunit protein uS7 from Xanthomonas axonopodis pv. citri (strain 306).